Reading from the N-terminus, the 213-residue chain is Thiamine-phosphate synthase (213 aa).

Residues 40 to 44 (QYRDK) and asparagine 72 each bind 4-amino-2-methyl-5-(diphosphooxymethyl)pyrimidine. 2 residues coordinate Mg(2+): aspartate 73 and aspartate 91. Threonine 110 serves as a coordination point for 4-amino-2-methyl-5-(diphosphooxymethyl)pyrimidine. 2-[(2R,5Z)-2-carboxy-4-methylthiazol-5(2H)-ylidene]ethyl phosphate is bound at residue 137–139 (SHT). Position 140 (lysine 140) interacts with 4-amino-2-methyl-5-(diphosphooxymethyl)pyrimidine. Residue glycine 167 participates in 2-[(2R,5Z)-2-carboxy-4-methylthiazol-5(2H)-ylidene]ethyl phosphate binding.

The protein belongs to the thiamine-phosphate synthase family. Mg(2+) serves as cofactor.

It carries out the reaction 2-[(2R,5Z)-2-carboxy-4-methylthiazol-5(2H)-ylidene]ethyl phosphate + 4-amino-2-methyl-5-(diphosphooxymethyl)pyrimidine + 2 H(+) = thiamine phosphate + CO2 + diphosphate. The enzyme catalyses 2-(2-carboxy-4-methylthiazol-5-yl)ethyl phosphate + 4-amino-2-methyl-5-(diphosphooxymethyl)pyrimidine + 2 H(+) = thiamine phosphate + CO2 + diphosphate. The catalysed reaction is 4-methyl-5-(2-phosphooxyethyl)-thiazole + 4-amino-2-methyl-5-(diphosphooxymethyl)pyrimidine + H(+) = thiamine phosphate + diphosphate. Its pathway is cofactor biosynthesis; thiamine diphosphate biosynthesis; thiamine phosphate from 4-amino-2-methyl-5-diphosphomethylpyrimidine and 4-methyl-5-(2-phosphoethyl)-thiazole: step 1/1. Condenses 4-methyl-5-(beta-hydroxyethyl)thiazole monophosphate (THZ-P) and 2-methyl-4-amino-5-hydroxymethyl pyrimidine pyrophosphate (HMP-PP) to form thiamine monophosphate (TMP). The polypeptide is Thiamine-phosphate synthase (Stutzerimonas stutzeri (strain A1501) (Pseudomonas stutzeri)).